The primary structure comprises 372 residues: L-selectin (372 aa).

Residues 1 to 28 (MIFPWKCQSTQRDLCNIFKLWGWTMLCC) form the signal peptide. The propeptide occupies 29-38 (DFLAHHGTDC). Topologically, residues 39–332 (WTYHYSEKPM…FSMIKEGDYN (294 aa)) are extracellular. Residues 55–155 (RFCRENYTDL…ACHKLKAALC (101 aa)) form the C-type lectin domain. Intrachain disulfides connect cysteine 57–cysteine 155, cysteine 128–cysteine 147, cysteine 128–cysteine 160, cysteine 160–cysteine 171, cysteine 165–cysteine 180, cysteine 182–cysteine 191, cysteine 197–cysteine 241, cysteine 227–cysteine 254, cysteine 259–cysteine 303, and cysteine 289–cysteine 316. Asparagine 60 and asparagine 104 each carry an N-linked (GlcNAc...) asparagine glycan. Glutamate 118, asparagine 120, glutamate 126, asparagine 143, and aspartate 144 together coordinate Ca(2+). Positions 156 to 192 (YTASCQPWSCSGHGECVEIINNYTCNCDVGYYGPQCQ) constitute an EGF-like domain. Asparagine 177 is a glycosylation site (N-linked (GlcNAc...) asparagine). Sushi domains follow at residues 195-256 (IQCE…TCQV) and 257-318 (IQCE…ICQK). N-linked (GlcNAc...) asparagine glycosylation is found at asparagine 216, asparagine 226, asparagine 232, asparagine 246, and asparagine 271. A helical membrane pass occupies residues 333-355 (PLFIPVAVMVTAFSGLAFIIWLA). The Cytoplasmic segment spans residues 356 to 372 (RRLKKGKKSKKSMDDPY).

It belongs to the selectin/LECAM family. In terms of assembly, interaction with SELPLG/PSGL1 and PODXL2 is required for promoting recruitment and rolling of leukocytes. This interaction is dependent on the sialyl Lewis X glycan modification of SELPLG and PODXL2, and tyrosine sulfation modifications of SELPLG. Sulfation on 'Tyr-51' of SELPLG is important for L-selectin binding. N-glycosylated.

The protein localises to the cell membrane. Functionally, calcium-dependent lectin that mediates cell adhesion by binding to glycoproteins on neighboring cells. Mediates the adherence of lymphocytes to endothelial cells of high endothelial venules in peripheral lymph nodes. Promotes initial tethering and rolling of leukocytes in endothelia. The protein is L-selectin (SELL) of Pongo pygmaeus (Bornean orangutan).